The following is a 140-amino-acid chain: Ribosome maturation factor RimP (140 aa).

Belongs to the RimP family.

It localises to the cytoplasm. Required for maturation of 30S ribosomal subunits. The sequence is that of Ribosome maturation factor RimP from Campylobacter lari (strain RM2100 / D67 / ATCC BAA-1060).